A 1049-amino-acid polypeptide reads, in one-letter code: Protein phosphatase Slingshot homolog 1 (1049 aa).

The segment covering Met1–Pro12 has biased composition (polar residues). The disordered stretch occupies residues Met1–Ser28. N-acetylalanine is present on Ala2. Low complexity predominate over residues Ser13–Glu25. Phosphoserine occurs at positions 37 and 57. The DEK-C domain occupies Glu249–Gly304. The Tyrosine-protein phosphatase domain occupies Lys308–Ala449. The Phosphocysteine intermediate role is filled by Cys393. The segment at Lys456–Ala499 is disordered. The segment covering Trp458–Gln468 has biased composition (polar residues). Ser515 is modified (phosphoserine). 4 disordered regions span residues Ala544 to Gln603, His693 to Lys787, His825 to Pro899, and Pro923 to Thr955. Residues Cys564–Glu573 show a composition bias toward basic and acidic residues. Ser576 carries the post-translational modification Phosphoserine. Positions Gly731–Glu742 are enriched in low complexity. Over residues Val772 to Lys787 the composition is skewed to basic and acidic residues. Ser897 bears the Phosphoserine mark. Residues Ser897–Ser1049 form an interaction with YWHAG region. Positions Ser925–Ser943 are enriched in low complexity. Position 978 is a phosphoserine (Ser978). Residues Thr989–Ser1049 form a disordered region. A compositionally biased stretch (polar residues) spans Val1001–Ser1013.

Belongs to the protein-tyrosine phosphatase family. In terms of assembly, interacts with actin and this stimulates phosphatase activity. Also interacts with LIMK1 and with the 14-3-3 proteins YWHAB, YWHAG, YWHAQ, and YWHAZ. Interaction with 14-3-3 proteins inhibits phosphatase activity and also blocks recruitment to lamellipodia and stimulation by actin. Post-translationally, phosphorylated. Inhibitory phosphorylation by PAK4 promotes binding to YWHAZ. Phosphorylation at Ser-978 is decreased by stimuli which promote actin reorganization and lamellipodia formation. Can be dephosphorylated and activated by PPP3CA/calcineurin A. Phosphorylation decreases immediately prior to telophase.

It is found in the cytoplasm. Its subcellular location is the cytoskeleton. It localises to the cell projection. The protein resides in the lamellipodium. The protein localises to the cleavage furrow. It is found in the midbody. It catalyses the reaction O-phospho-L-tyrosyl-[protein] + H2O = L-tyrosyl-[protein] + phosphate. It carries out the reaction O-phospho-L-seryl-[protein] + H2O = L-seryl-[protein] + phosphate. The enzyme catalyses O-phospho-L-threonyl-[protein] + H2O = L-threonyl-[protein] + phosphate. Functionally, protein phosphatase which regulates actin filament dynamics. Dephosphorylates and activates the actin binding/depolymerizing factor cofilin, which subsequently binds to actin filaments and stimulates their disassembly. Inhibitory phosphorylation of cofilin is mediated by LIMK1, which may also be dephosphorylated and inactivated by this protein. The chain is Protein phosphatase Slingshot homolog 1 from Homo sapiens (Human).